A 192-amino-acid polypeptide reads, in one-letter code: MSDYFLLFIGTVLVNNFVLVKFLGLCPFMGVSNKIETAVGMSFATTFVLTLTAAVSYIVNKYILLPLDLVYLQTIGFILVIAVVVQFTEMVMHKTSPTLYRLLGIFLPLITTNCAILGLALLNINEDHDFVESIIYGFSAGVGFSLVLVVFSSMRERLAASDIPLPFKGGSIAMITAGLMSLAFMGFTGLIK.

Helical transmembrane passes span 5–25 (FLLF…FLGL), 39–59 (VGMS…SYIV), 63–83 (ILLP…VIAV), 102–122 (LLGI…LALL), 134–154 (IIYG…FSSM), and 171–191 (SIAM…TGLI).

This sequence belongs to the NqrDE/RnfAE family. In terms of assembly, the complex is composed of six subunits: RnfA, RnfB, RnfC, RnfD, RnfE and RnfG.

Its subcellular location is the cell inner membrane. Functionally, part of a membrane-bound complex that couples electron transfer with translocation of ions across the membrane. This chain is Ion-translocating oxidoreductase complex subunit A, found in Psychromonas ingrahamii (strain DSM 17664 / CCUG 51855 / 37).